Reading from the N-terminus, the 876-residue chain is Leucine--tRNA ligase (876 aa).

A 'HIGH' region motif is present at residues 43 to 53 (PYPSGRIHMGH). A 'KMSKS' region motif is present at residues 632-636 (KMSKS). Residue lysine 635 coordinates ATP.

Belongs to the class-I aminoacyl-tRNA synthetase family.

Its subcellular location is the cytoplasm. It catalyses the reaction tRNA(Leu) + L-leucine + ATP = L-leucyl-tRNA(Leu) + AMP + diphosphate. In Sinorhizobium fredii (strain NBRC 101917 / NGR234), this protein is Leucine--tRNA ligase.